Here is a 302-residue protein sequence, read N- to C-terminus: Acetylxylan esterase (302 aa).

Positions 1–20 (MPSVKETLTLLLSQAFLATG) are cleaved as a signal peptide. The propeptide occupies 21–31 (SPVDGETVVKR). Pyrrolidone carboxylic acid is present on Gln-32. The N-linked (GlcNAc...) asparagine glycan is linked to Asn-94. Residue Ser-121 is part of the active site. A disordered region spans residues 236 to 273 (QLSSGGSQPPGGGPTSTSRPTSTRTGSSPGPTQTHWGQ). The interval 244-266 (PPGGGPTSTSRPTSTRTGSSPGP) is linker. Residues 250–269 (TSTSRPTSTRTGSSPGPTQT) are compositionally biased toward low complexity. A CBM1 domain is found at 266-302 (PTQTHWGQCGGQGWTGPTQCESGTTCQVISQWYSQCL). Intrachain disulfides connect Cys-274-Cys-291 and Cys-285-Cys-301.

Belongs to the cutinase family. Acetylxylan esterase subfamily. In terms of assembly, monomer. Glycosylated.

The protein resides in the secreted. It catalyses the reaction Deacetylation of xylans and xylo-oligosaccharides.. Its pathway is glycan degradation; xylan degradation. Inhibited by phenylmethylsulfonyl flouride. Degrades acetylated xylans by cleaving acetyl side groups from the hetero-xylan backbone. The polypeptide is Acetylxylan esterase (axe1) (Hypocrea jecorina (Trichoderma reesei)).